We begin with the raw amino-acid sequence, 104 residues long: Integration host factor subunit alpha (104 aa).

The protein belongs to the bacterial histone-like protein family. As to quaternary structure, heterodimer of an alpha and a beta chain.

This protein is one of the two subunits of integration host factor, a specific DNA-binding protein that functions in genetic recombination as well as in transcriptional and translational control. The protein is Integration host factor subunit alpha of Buchnera aphidicola subsp. Cinara cedri (strain Cc).